Consider the following 411-residue polypeptide: 2,3-bisphosphoglycerate-independent phosphoglycerate mutase (411 aa).

The protein belongs to the BPG-independent phosphoglycerate mutase family. A-PGAM subfamily.

It carries out the reaction (2R)-2-phosphoglycerate = (2R)-3-phosphoglycerate. Its pathway is carbohydrate degradation; glycolysis; pyruvate from D-glyceraldehyde 3-phosphate: step 3/5. Its function is as follows. Catalyzes the interconversion of 2-phosphoglycerate and 3-phosphoglycerate. The sequence is that of 2,3-bisphosphoglycerate-independent phosphoglycerate mutase from Pyrobaculum calidifontis (strain DSM 21063 / JCM 11548 / VA1).